Consider the following 340-residue polypeptide: NADH-quinone oxidoreductase subunit H (340 aa).

Helical transmembrane passes span 9-29 (IWII…VAFI), 81-101 (LIAP…IPFA), 113-133 (LLFL…AGWA), 158-178 (GFAL…GIVL), 184-204 (LWHW…ITAV), 221-240 (IVAG…FFLA), 245-264 (MVLV…LSPF), 273-293 (LFAW…FIFT), and 316-336 (VLIP…EFHW).

Belongs to the complex I subunit 1 family. As to quaternary structure, NDH-1 is composed of 14 different subunits. Subunits NuoA, H, J, K, L, M, N constitute the membrane sector of the complex.

The protein resides in the cell inner membrane. The catalysed reaction is a quinone + NADH + 5 H(+)(in) = a quinol + NAD(+) + 4 H(+)(out). Its function is as follows. NDH-1 shuttles electrons from NADH, via FMN and iron-sulfur (Fe-S) centers, to quinones in the respiratory chain. The immediate electron acceptor for the enzyme in this species is believed to be ubiquinone. Couples the redox reaction to proton translocation (for every two electrons transferred, four hydrogen ions are translocated across the cytoplasmic membrane), and thus conserves the redox energy in a proton gradient. This subunit may bind ubiquinone. The protein is NADH-quinone oxidoreductase subunit H of Coxiella burnetii (strain CbuK_Q154) (Coxiella burnetii (strain Q154)).